Consider the following 1035-residue polypeptide: Ephrin type-A receptor 6 (1035 aa).

The signal sequence occupies residues 1-22 (MGGCEVREFLLQFGFFLPLLTA). The Extracellular portion of the chain corresponds to 23 to 549 (WTGDCSHVSN…MAAEQGQILV (527 aa)). One can recognise an Eph LBD domain in the interval 33 to 211 (QVVLLDTTTV…FYKKCPFTVR (179 aa)). Fibronectin type-III domains lie at 330–440 (PPSA…TDHD) and 441–536 (APSL…TGDE). N-linked (GlcNAc...) asparagine glycans are attached at residues asparagine 342, asparagine 396, and asparagine 409. A helical membrane pass occupies residues 550–570 (IATAAVGGFTLLVILTLFFLI). Residues 571 to 1035 (TGRCQWYIKA…MHIQEKGFHV (465 aa)) lie on the Cytoplasmic side of the membrane. 2 positions are modified to phosphotyrosine; by autocatalysis: tyrosine 605 and tyrosine 611. Residues 630-943 (IRIERVIGAG…RNPSALHTLV (314 aa)) enclose the Protein kinase domain. ATP-binding positions include 636–644 (IGAGEFGEV) and lysine 662. Catalysis depends on aspartate 797, which acts as the Proton acceptor. Phosphotyrosine; by autocatalysis is present on residues tyrosine 830 and tyrosine 977. The 65-residue stretch at 960 to 1024 (PLFVTVGDWL…VSSIQTLRLH (65 aa)) folds into the SAM domain. Residues 1033–1035 (FHV) carry the PDZ-binding motif.

It belongs to the protein kinase superfamily. Tyr protein kinase family. Ephrin receptor subfamily. Heterotetramer upon binding of the ligand. The heterotetramer is composed of an ephrin dimer and a receptor dimer. Oligomerization is probably required to induce biological responses. Interacts (via SAM domain) with ANKS1A (via SAM domain).

Its subcellular location is the membrane. The enzyme catalyses L-tyrosyl-[protein] + ATP = O-phospho-L-tyrosyl-[protein] + ADP + H(+). Functionally, receptor tyrosine kinase which binds promiscuously GPI-anchored ephrin-A family ligands residing on adjacent cells, leading to contact-dependent bidirectional signaling into neighboring cells. The signaling pathway downstream of the receptor is referred to as forward signaling while the signaling pathway downstream of the ephrin ligand is referred to as reverse signaling. The chain is Ephrin type-A receptor 6 (Epha6) from Mus musculus (Mouse).